The chain runs to 82 residues: Omega-conotoxin-like TxMKLT1-031 (82 aa).

The signal sequence occupies residues 1 to 22; the sequence is MKLTCMMIVAVLFLTAWTLVMA. The propeptide occupies 23–49; the sequence is DDSNNGLANLFSKSRDEMEDPEASKLE. Disulfide bonds link C53–C71, C60–C76, and C70–C81.

Belongs to the conotoxin O1 superfamily. In terms of tissue distribution, expressed by the venom duct.

It localises to the secreted. Its function is as follows. Omega-conotoxins act at presynaptic membranes, they bind and block voltage-gated calcium channels (Cav). The protein is Omega-conotoxin-like TxMKLT1-031 of Conus textile (Cloth-of-gold cone).